An 852-amino-acid chain; its full sequence is Disks large homolog 2 (852 aa).

S-palmitoyl cysteine attachment occurs at residues Cys-5 and Cys-7. The residue at position 28 (Ser-28) is a Phosphoserine. Tyr-58 is modified (phosphotyrosine). Ser-65 is subject to Phosphoserine. 2 consecutive PDZ domains span residues 98–185 (EITL…RRRR) and 193–280 (EIKL…GKPT). Phosphoserine is present on residues Ser-307, Ser-328, Ser-360, Ser-365, Ser-406, and Ser-414. In terms of domain architecture, PDZ 3 spans 421 to 502 (KVVLHKGSTG…TVTIIAQYQP (82 aa)). The residue at position 505 (Tyr-505) is a Phosphotyrosine. Phosphoserine is present on residues Ser-528, Ser-530, and Ser-553. The SH3 domain maps to 536–606 (KRSLYVRAMF…PSKRRVERKE (71 aa)). The Guanylate kinase-like domain maps to 662–837 (TRPVIILGPM…IYNQCKLVIE (176 aa)). Phosphotyrosine occurs at positions 732 and 737.

In terms of assembly, interacts with NOS1/nNOS through second PDZ domain. Interacts with KCNJ2/Kir2.1 (via C-terminus) through one of its PDZ domains. Interacts with KCNJ4. Interacts with FRMPD4 (via C-terminus). Interacts through its PDZ domains with NETO1. Interacts with LRFN1, LRFN2 and LRFN4. Interacts with FASLG. Interacts with KCNJ4. Interacts with ADAM22. Interacts with DGKI (via PDZ-binding motif). Post-translationally, palmitoylation of isoform 1 and isoform 2 is not required for targeting to postsynaptic density. In terms of tissue distribution, brain. Highest levels of isoform 1 in cortex, olfactory bulb, thalamus, hypothalamus, striatum and hippocampus. Highest level of isoform 2 in olfactory bulb. Reduced levels in cortex and hippocampus. Highest level of isoform 4 in spinal cord. Low levels of isoform 4, isoform 6, and isoform 7 in superior cervical ganglion.

The protein localises to the cell membrane. It localises to the postsynaptic density. The protein resides in the synapse. It is found in the membrane. Its subcellular location is the cell projection. The protein localises to the axon. It localises to the perikaryon. In terms of biological role, required for perception of chronic pain through NMDA receptor signaling. Regulates surface expression of NMDA receptors in dorsal horn neurons of the spinal cord. Interacts with the cytoplasmic tail of NMDA receptor subunits as well as inward rectifying potassium channels. Involved in regulation of synaptic stability at cholinergic synapses. Part of the postsynaptic protein scaffold of excitatory synapses. The chain is Disks large homolog 2 (Dlg2) from Mus musculus (Mouse).